Here is a 418-residue protein sequence, read N- to C-terminus: Deubiquitinase and deneddylase Dub1 (418 aa).

The segment covering 1 to 10 has biased composition (polar residues); sequence MLSPTNSISK. The segment at 1–23 is disordered; the sequence is MLSPTNSISKTAPVPPQDSSKPV. The helical transmembrane segment at 40 to 60 threads the bilayer; the sequence is TALAVLLVVVTLGLILLFYSF. Residues 72–144 are disordered; it reads TRPSTKEQPT…PLPPKAPKPV (73 aa). Over residues 86 to 141 the composition is skewed to pro residues; the sequence is VPLPSPPLAVPRPSTPPPPVISRPSTPPAPTPAISPPSTPSAPKPSTPPPLPPKAP. Residues His288, Asp305, and Cys358 contribute to the active site.

The protein belongs to the peptidase C48 family.

The protein localises to the secreted. Its subcellular location is the host cell. The protein resides in the membrane. Its function is as follows. Effector proteins function to alter host cell physiology and promote bacterial survival in host tissues. This protease possesses deubiquitinating and deneddylating activities. The protein is Deubiquitinase and deneddylase Dub1 (cdu1) of Chlamydia trachomatis serovar B (strain Jali20/OT).